The primary structure comprises 363 residues: Pyrimidine monooxygenase RutA (363 aa).

FMN-binding positions include 49 to 50, Asn115, Glu124, 140 to 141, and Ser190; these read IK and RY.

The protein belongs to the NtaA/SnaA/DszA monooxygenase family. RutA subfamily.

It carries out the reaction uracil + FMNH2 + NADH + O2 = (Z)-3-ureidoacrylate + FMN + NAD(+) + H2O + H(+). The enzyme catalyses thymine + FMNH2 + NADH + O2 = (Z)-2-methylureidoacrylate + FMN + NAD(+) + H2O + H(+). In terms of biological role, catalyzes the pyrimidine ring opening between N-3 and C-4 by an unusual flavin hydroperoxide-catalyzed mechanism, adding oxygen atoms in the process to yield ureidoacrylate peracid, that immediately reacts with FMN forming ureidoacrylate and FMN-N(5)-oxide. The FMN-N(5)-oxide reacts spontaneously with NADH to produce FMN. Requires the flavin reductase RutF to regenerate FMN in vivo. This Enterobacter sp. (strain 638) protein is Pyrimidine monooxygenase RutA.